The sequence spans 518 residues: 2-isopropylmalate synthase (518 aa).

In terms of domain architecture, Pyruvate carboxyltransferase spans 4-266; the sequence is INVFDTTLRD…DSSLNLHELK (263 aa). Mn(2+)-binding residues include aspartate 13, histidine 201, histidine 203, and asparagine 237. The interval 391 to 518 is regulatory domain; sequence EFLSLQVHYG…GLKRQTAVGS (128 aa).

The protein belongs to the alpha-IPM synthase/homocitrate synthase family. LeuA type 1 subfamily. Homodimer. Mn(2+) serves as cofactor.

Its subcellular location is the cytoplasm. The enzyme catalyses 3-methyl-2-oxobutanoate + acetyl-CoA + H2O = (2S)-2-isopropylmalate + CoA + H(+). It functions in the pathway amino-acid biosynthesis; L-leucine biosynthesis; L-leucine from 3-methyl-2-oxobutanoate: step 1/4. Functionally, catalyzes the condensation of the acetyl group of acetyl-CoA with 3-methyl-2-oxobutanoate (2-ketoisovalerate) to form 3-carboxy-3-hydroxy-4-methylpentanoate (2-isopropylmalate). This is 2-isopropylmalate synthase from Bacillus velezensis (strain DSM 23117 / BGSC 10A6 / LMG 26770 / FZB42) (Bacillus amyloliquefaciens subsp. plantarum).